A 543-amino-acid chain; its full sequence is Protein SGE1 (543 aa).

The Cytoplasmic portion of the chain corresponds to 1–8 (MKSTLSLT). Residues 9-29 (LCVISLLLTLFLAALDIVIVV) form a helical membrane-spanning segment. The Extracellular portion of the chain corresponds to 30–41 (TLYDTIGIKFHD). A helical membrane pass occupies residues 42 to 62 (FGNIGWLVTGYALSNAVFMLL). At 63–79 (WGRLAEILGTKECLMIS) the chain is on the cytoplasmic side. The chain crosses the membrane as a helical span at residues 80–100 (VIVFEIGSLISALSNSMATLI). Residues 101–103 (SGR) lie on the Extracellular side of the membrane. Residues 104–124 (VVAGFGGSGIESLAFVVGTSI) form a helical membrane-spanning segment. Over 125–131 (VRENHRG) the chain is Cytoplasmic. A helical transmembrane segment spans residues 132 to 152 (IMITALAISYVIAEGVGPFIG). The Extracellular segment spans residues 153 to 162 (GAFNEHLSWR). Residues 163 to 183 (WCFYINLPIGAFAFIILAFCN) form a helical membrane-spanning segment. The Cytoplasmic portion of the chain corresponds to 184–227 (TSGEPHQKMWLPSKIKKIMNYDYGELLKASFWKNTFEVLVFKLD). A helical transmembrane segment spans residues 228–248 (MVGIILSSAGFTLLMLGLSFG). Topologically, residues 249 to 255 (GNNFPWN) are extracellular. Residues 256–276 (SGIIICFFTVGPILLLLFCAY) form a helical membrane-spanning segment. The Cytoplasmic portion of the chain corresponds to 277–300 (DFHFLSLSGLHYDNKRIKPLLTWN). The helical transmembrane segment at 301–321 (IASNCGIFTSSITGFLSCFAY) threads the bilayer. The Extracellular segment spans residues 322–341 (ELQSAYLVQLYQLVFKKKPT). A helical transmembrane segment spans residues 342–362 (LASIHLWELSIPAMIATMAIA). Residues 363-373 (YLNSKYGIIKP) are Cytoplasmic-facing. A helical membrane pass occupies residues 374–394 (AIVFGVLCGIVGSGLFTLING). Residues 395–399 (ELSQS) are Extracellular-facing. Residues 400–420 (IGYSILPGIAFGSIFQATLLS) form a helical membrane-spanning segment. Over 421 to 443 (SQVQITSDDPDFQNKFIEVTAFN) the chain is Cytoplasmic. The chain crosses the membrane as a helical span at residues 444 to 464 (SFAKSLGFAFGGNMGAMIFTA). At 465-508 (SLKNQMRSSQLNIPQFTSVETLLAYSTEHYDGPQSSLSKFINTA) the chain is on the extracellular side. The helical transmembrane segment at 509-529 (IHDVFYCALGCYALSFFFGIF) threads the bilayer. The Cytoplasmic portion of the chain corresponds to 530–543 (TSSKKTTISAKKQQ).

This sequence belongs to the major facilitator superfamily.

The protein resides in the membrane. In terms of biological role, drug export permease. Multi-copy suppressor of loss-of-function mutation of GAL11. Involved specifically in transcription of GAL4-dependent genes. Can link GAL4 with the basal transcription machinery if GAL11 is missing. Confers resistance to 10-N-nonyl acridine orange (NAO) and in general to cationic dyes. This is Protein SGE1 (SGE1) from Saccharomyces cerevisiae (strain ATCC 204508 / S288c) (Baker's yeast).